The following is a 138-amino-acid chain: Large ribosomal subunit protein uL16 (138 aa).

Residues methionine 1–glycine 16 show a composition bias toward basic residues. The tract at residues methionine 1 to threonine 25 is disordered.

This sequence belongs to the universal ribosomal protein uL16 family. In terms of assembly, part of the 50S ribosomal subunit.

Its function is as follows. Binds 23S rRNA and is also seen to make contacts with the A and possibly P site tRNAs. The protein is Large ribosomal subunit protein uL16 of Pseudarthrobacter chlorophenolicus (strain ATCC 700700 / DSM 12829 / CIP 107037 / JCM 12360 / KCTC 9906 / NCIMB 13794 / A6) (Arthrobacter chlorophenolicus).